We begin with the raw amino-acid sequence, 588 residues long: Neuropeptide-like 1 (588 aa).

A propeptide spanning residues 1 to 179 is cleaved from the precursor; sequence MQCIPKKTFM…DPEVLEYSPD (179 aa). Residues 115–143 are disordered; sequence NGDLPITIQERESDNDDEEKRSASSSDNV. Threonine 194 carries the threonine amide modification. A serine amide mark is found at serine 210, serine 227, and serine 244. Tyrosine 260 carries the post-translational modification Tyrosine amide. Glutamate 281 bears the Glutamic acid 1-amide mark. Residues 285–299 constitute a propeptide that is removed on maturation; sequence SIASLARSGDWPSVA. Tyrosine 318 bears the Tyrosine amide mark. The propeptide occupies 321–588; the sequence is SLSDDREAPS…SNSHIAPRSM (268 aa). Positions 342–382 are disordered; sequence GNSEGKENEWQATPFTVSEDLDEGKAKNRSNRRIEASQTRH.

The protein localises to the secreted. This is Neuropeptide-like 1 from Camponotus floridanus (Florida carpenter ant).